We begin with the raw amino-acid sequence, 434 residues long: Trigger factor (434 aa).

The PPIase FKBP-type domain occupies 160-245; it reads DDKVKMNFIG…LTEVQAANLP (86 aa).

Belongs to the FKBP-type PPIase family. Tig subfamily.

The protein resides in the cytoplasm. The enzyme catalyses [protein]-peptidylproline (omega=180) = [protein]-peptidylproline (omega=0). Functionally, involved in protein export. Acts as a chaperone by maintaining the newly synthesized protein in an open conformation. Functions as a peptidyl-prolyl cis-trans isomerase. The polypeptide is Trigger factor (Shewanella frigidimarina (strain NCIMB 400)).